Consider the following 544-residue polypeptide: CTP synthase (544 aa).

Residues 1-265 (MTKFIFVTGG…DNIITEQLQL (265 aa)) form an amidoligase domain region. Residue Ser13 participates in CTP binding. Ser13 contacts UTP. Residues 14–19 (SLGKGI) and Asp71 each bind ATP. Asp71 and Glu139 together coordinate Mg(2+). CTP contacts are provided by residues 146 to 148 (DIE), 186 to 191 (KTKPTQ), and Lys222. UTP is bound by residues 186–191 (KTKPTQ) and Lys222. The Glutamine amidotransferase type-1 domain occupies 290-544 (KIAMVGKYVD…VKAALNNKKA (255 aa)). Residue Gly353 coordinates L-glutamine. The active-site Nucleophile; for glutamine hydrolysis is the Cys380. L-glutamine contacts are provided by residues 381-384 (LGMQ), Glu404, and Arg471. Catalysis depends on residues His517 and Glu519.

This sequence belongs to the CTP synthase family. In terms of assembly, homotetramer.

It catalyses the reaction UTP + L-glutamine + ATP + H2O = CTP + L-glutamate + ADP + phosphate + 2 H(+). The catalysed reaction is L-glutamine + H2O = L-glutamate + NH4(+). It carries out the reaction UTP + NH4(+) + ATP = CTP + ADP + phosphate + 2 H(+). Its pathway is pyrimidine metabolism; CTP biosynthesis via de novo pathway; CTP from UDP: step 2/2. Its activity is regulated as follows. Allosterically activated by GTP, when glutamine is the substrate; GTP has no effect on the reaction when ammonia is the substrate. The allosteric effector GTP functions by stabilizing the protein conformation that binds the tetrahedral intermediate(s) formed during glutamine hydrolysis. Inhibited by the product CTP, via allosteric rather than competitive inhibition. Its function is as follows. Catalyzes the ATP-dependent amination of UTP to CTP with either L-glutamine or ammonia as the source of nitrogen. Regulates intracellular CTP levels through interactions with the four ribonucleotide triphosphates. The sequence is that of CTP synthase from Neisseria gonorrhoeae (strain ATCC 700825 / FA 1090).